Here is a 554-residue protein sequence, read N- to C-terminus: Chaperonin GroEL (554 aa).

ATP contacts are provided by residues 29–32 (TLGP), K50, 86–90 (DGTTT), G414, and D495.

It belongs to the chaperonin (HSP60) family. As to quaternary structure, forms a cylinder of 14 subunits composed of two heptameric rings stacked back-to-back. Interacts with the co-chaperonin GroES.

The protein localises to the cytoplasm. It carries out the reaction ATP + H2O + a folded polypeptide = ADP + phosphate + an unfolded polypeptide.. Together with its co-chaperonin GroES, plays an essential role in assisting protein folding. The GroEL-GroES system forms a nano-cage that allows encapsulation of the non-native substrate proteins and provides a physical environment optimized to promote and accelerate protein folding. This chain is Chaperonin GroEL, found in Pelagibacter ubique (strain HTCC1062).